Reading from the N-terminus, the 546-residue chain is MGNSQEPQDFNISVMPSSLTPVHVAKAAEGLNLYDTASHQVSHFVPLKPGEVGIYVCGATVQSSPHIGHIRAAVAFDIVRRWFLKLGYKVTFVRNVTDIDDKILVKAAAAGQRWWARAYYYEREFTEAYNTLGVLPPTVEPRATGHMSDMIDLIQRILDNGHGYVVTDADGKPTGNVYFDVASWPHYGELTHQKQTSEVDEAAAVADRMGPSVDATGADKYNPVDPADASPDKHDPRDFALWKAPKDTDPEDARWSTPFGVGRPGWHIECSAMSHRYLGDGFDIHGGGLDLRFPHHENEMAQTCAAGYPSAARWMHSAWVTAKGEKMSKSLGTGLSVPSVLAEHSAWVVRYALGSVQYRSMLEWSDQALVEAQAAYDRVSNFIERAGVALGGQPSREEVAAVSADDLPADFVAAMNDDVNVSGATAAIFTAIRSGNTLLSQLADRADSETAKAEVREALLAVRAMLDTLGLDPLAEPWVSAGGAADGTAESPEHAALEALIAEQLNARAEARKAKDFAKADQIRDALTEAGIAIEDGPQGSTWSLK.

Cysteine 57 serves as a coordination point for Zn(2+). The short motif at 59–69 (ATVQSSPHIGH) is the 'HIGH' region element. The tract at residues 211–236 (PSVDATGADKYNPVDPADASPDKHDP) is disordered. Residues cysteine 270, histidine 295, and glutamate 299 each coordinate Zn(2+). Positions 326 to 330 (KMSKS) match the 'KMSKS' region motif. Residue lysine 329 coordinates ATP.

It belongs to the class-I aminoacyl-tRNA synthetase family. Monomer. The cofactor is Zn(2+).

The protein localises to the cytoplasm. The catalysed reaction is tRNA(Cys) + L-cysteine + ATP = L-cysteinyl-tRNA(Cys) + AMP + diphosphate. The chain is Cysteine--tRNA ligase from Bifidobacterium longum (strain NCC 2705).